The following is a 516-amino-acid chain: Glucose-1-phosphate adenylyltransferase large subunit 1, chloroplastic/amyloplastic (516 aa).

A chloroplast-targeting transit peptide spans 1 to 45; that stretch reads MQFALALDTNSGPHQIRSCEGDGIDRLEKLSIGGRKQEKALRNRC.

This sequence belongs to the bacterial/plant glucose-1-phosphate adenylyltransferase family. In terms of assembly, heterotetramer. In terms of tissue distribution, endosperm.

It localises to the plastid. Its subcellular location is the chloroplast. The protein localises to the amyloplast. The catalysed reaction is alpha-D-glucose 1-phosphate + ATP + H(+) = ADP-alpha-D-glucose + diphosphate. Its pathway is glycan biosynthesis; starch biosynthesis. Its activity is regulated as follows. Activated by 3'phosphoglycerate, inhibited by orthophosphate. Allosteric regulation. Functionally, this protein plays a role in synthesis of starch. It catalyzes the synthesis of the activated glycosyl donor, ADP-glucose from Glc-1-P and ATP. The polypeptide is Glucose-1-phosphate adenylyltransferase large subunit 1, chloroplastic/amyloplastic (SH2) (Zea mays (Maize)).